Here is a 345-residue protein sequence, read N- to C-terminus: Phosphate acyltransferase (345 aa).

The protein belongs to the PlsX family. Homodimer. Probably interacts with PlsY.

The protein localises to the cytoplasm. It carries out the reaction a fatty acyl-[ACP] + phosphate = an acyl phosphate + holo-[ACP]. It participates in lipid metabolism; phospholipid metabolism. Its function is as follows. Catalyzes the reversible formation of acyl-phosphate (acyl-PO(4)) from acyl-[acyl-carrier-protein] (acyl-ACP). This enzyme utilizes acyl-ACP as fatty acyl donor, but not acyl-CoA. The protein is Phosphate acyltransferase of Wolbachia pipientis wMel.